We begin with the raw amino-acid sequence, 46 residues long: Protein PsbN (46 aa).

Residues 10–30 traverse the membrane as a helical segment; sequence LAIIVLVVLLGLTGLGVYMAF.

The protein belongs to the PsbN family.

It is found in the cellular thylakoid membrane. Functionally, may play a role in photosystem I and II biogenesis. The chain is Protein PsbN from Prochlorococcus marinus (strain MIT 9211).